Consider the following 180-residue polypeptide: Large ribosomal subunit protein uL5c (180 aa).

The protein belongs to the universal ribosomal protein uL5 family. As to quaternary structure, part of the 50S ribosomal subunit; contacts the 5S rRNA.

It localises to the plastid. The protein resides in the chloroplast. Binds 5S rRNA, forms part of the central protuberance of the 50S subunit. This is Large ribosomal subunit protein uL5c (rpl5) from Oltmannsiellopsis viridis (Marine flagellate).